The sequence spans 252 residues: Hydroxyacylglutathione hydrolase (252 aa).

Zn(2+) contacts are provided by His-54, His-56, Asp-58, His-59, His-111, Asp-130, and His-170.

It belongs to the metallo-beta-lactamase superfamily. Glyoxalase II family. As to quaternary structure, monomer. The cofactor is Zn(2+).

It carries out the reaction an S-(2-hydroxyacyl)glutathione + H2O = a 2-hydroxy carboxylate + glutathione + H(+). Its pathway is secondary metabolite metabolism; methylglyoxal degradation; (R)-lactate from methylglyoxal: step 2/2. Thiolesterase that catalyzes the hydrolysis of S-D-lactoyl-glutathione to form glutathione and D-lactic acid. This is Hydroxyacylglutathione hydrolase from Francisella tularensis subsp. tularensis (strain FSC 198).